A 449-amino-acid polypeptide reads, in one-letter code: Lysine-sensitive aspartokinase 3 (449 aa).

The aspartokinase stretch occupies residues 2 to 245 (SEIVVSKFGG…AAKRIDEIAF (244 aa)). 8–11 (KFGG) lines the ATP pocket. Substrate contacts are provided by residues T45, E119, and 198 to 201 (RGGS). ATP-binding positions include 221 to 222 (TD), Y227, R232, and 257 to 258 (KV). The segment at 246 to 449 (AEAAEMATFG…VQKLHSNLFE (204 aa)) is interface. The required for homodimerization stretch occupies residues 299–449 (FRALALRRNQ…VQKLHSNLFE (151 aa)). The 82-residue stretch at 313–394 (LHSLNMLHSR…GLALVALIGN (82 aa)) folds into the ACT domain. Residues M318, S321, 324–325 (FL), 338–340 (SVD), and 345–346 (SE) each bind L-lysine.

The protein belongs to the aspartokinase family. In terms of assembly, homodimer. In the inactive form a homotetramer is formed.

The enzyme catalyses L-aspartate + ATP = 4-phospho-L-aspartate + ADP. It participates in amino-acid biosynthesis; L-lysine biosynthesis via DAP pathway; (S)-tetrahydrodipicolinate from L-aspartate: step 1/4. Synthesis and activity are sensitive to the allosteric inhibitor lysine, one of the end metabolites of the aspartic acid family branched pathway. This Escherichia coli (strain K12) protein is Lysine-sensitive aspartokinase 3 (lysC).